Here is a 72-residue protein sequence, read N- to C-terminus: DNA-directed RNA polymerase subunit Rpo10 (72 aa).

Zn(2+) is bound by residues cysteine 7, cysteine 10, cysteine 53, and cysteine 54.

Belongs to the archaeal Rpo10/eukaryotic RPB10 RNA polymerase subunit family. In terms of assembly, part of the RNA polymerase complex. Requires Zn(2+) as cofactor.

It is found in the cytoplasm. The enzyme catalyses RNA(n) + a ribonucleoside 5'-triphosphate = RNA(n+1) + diphosphate. DNA-dependent RNA polymerase (RNAP) catalyzes the transcription of DNA into RNA using the four ribonucleoside triphosphates as substrates. This is DNA-directed RNA polymerase subunit Rpo10 from Thermoplasma volcanium (strain ATCC 51530 / DSM 4299 / JCM 9571 / NBRC 15438 / GSS1).